A 33-amino-acid chain; its full sequence is Pardaxin P-3 (33 aa).

Belongs to the pardaxin family. As to quaternary structure, in aqueous solution exists as a tetramer.

It localises to the secreted. It is found in the target cell membrane. Functionally, exhibits unusual shark repellent and surfactant properties. Forms voltage-dependent, ion-permeable channels in membranes. At high concentration causes cell membrane lysis. This chain is Pardaxin P-3, found in Pardachirus pavoninus (Peacock sole).